The primary structure comprises 511 residues: 2-isopropylmalate synthase (511 aa).

Positions 6–269 (IIIFDTTLRD…YTDIKCENIF (264 aa)) constitute a Pyruvate carboxyltransferase domain. Mn(2+)-binding residues include aspartate 15, histidine 203, histidine 205, and asparagine 239. Residues 394-511 (VIEKLSVISG…SLKVEERKMA (118 aa)) form a regulatory domain region.

This sequence belongs to the alpha-IPM synthase/homocitrate synthase family. LeuA type 1 subfamily. Homodimer. The cofactor is Mn(2+).

It localises to the cytoplasm. The catalysed reaction is 3-methyl-2-oxobutanoate + acetyl-CoA + H2O = (2S)-2-isopropylmalate + CoA + H(+). It participates in amino-acid biosynthesis; L-leucine biosynthesis; L-leucine from 3-methyl-2-oxobutanoate: step 1/4. Functionally, catalyzes the condensation of the acetyl group of acetyl-CoA with 3-methyl-2-oxobutanoate (2-ketoisovalerate) to form 3-carboxy-3-hydroxy-4-methylpentanoate (2-isopropylmalate). The protein is 2-isopropylmalate synthase of Campylobacter jejuni (strain RM1221).